We begin with the raw amino-acid sequence, 451 residues long: Zinc metalloproteinase nas-16 (451 aa).

Positions 70-273 (QVVTKLFSPQ…LTINTAYNCK (204 aa)) constitute a Peptidase M12A domain. 4 disulfides stabilise this stretch: C127–C272, C148–C167, C274–C291, and C296–C305. Residue N133 is glycosylated (N-linked (GlcNAc...) asparagine). Residue H175 participates in Zn(2+) binding. E176 is an active-site residue. Zn(2+)-binding residues include H179 and H185. In terms of domain architecture, EGF-like spans 267–306 (NTAYNCKCPSELLCANGGYTNPSNCLECICPLGYGGVLCD). N363 and N438 each carry an N-linked (GlcNAc...) asparagine glycan.

Zn(2+) serves as cofactor.

The protein localises to the secreted. Functionally, metalloprotease. The protein is Zinc metalloproteinase nas-16 (nas-16) of Caenorhabditis elegans.